Consider the following 186-residue polypeptide: Peptide deformylase (186 aa).

Positions 99 and 141 each coordinate Fe cation. The active site involves Glu142. His145 serves as a coordination point for Fe cation.

Belongs to the polypeptide deformylase family. Fe(2+) serves as cofactor.

The catalysed reaction is N-terminal N-formyl-L-methionyl-[peptide] + H2O = N-terminal L-methionyl-[peptide] + formate. Functionally, removes the formyl group from the N-terminal Met of newly synthesized proteins. Requires at least a dipeptide for an efficient rate of reaction. N-terminal L-methionine is a prerequisite for activity but the enzyme has broad specificity at other positions. The chain is Peptide deformylase from Chlamydia caviae (strain ATCC VR-813 / DSM 19441 / 03DC25 / GPIC) (Chlamydophila caviae).